The following is a 219-amino-acid chain: Lipid transferase CIDEA (219 aa).

Positions 33 to 110 constitute a CIDE-N domain; sequence PARPFRVSNH…ILEKGQKWMP (78 aa). An amphipathic helix region spans residues 163-180; the sequence is CTGLKGLLRSLLRFLSYS.

This sequence belongs to the CIDE family. As to quaternary structure, homodimer. Interacts with CIDEC. Directly interacts with CEBPB. Interacts with isoform CLSTN3beta of CLSTN3; inhibiting the lipid transferase activity of CIDEA. Expressed in omental and subcutaneous adipose tissue (at protein level).

The protein resides in the lipid droplet. It is found in the nucleus. It carries out the reaction a triacyl-sn-glycerol(in) = a triacyl-sn-glycerol(out). Lipid transferase that promotes unilocular lipid droplet formation by mediating lipid droplet fusion. Lipid droplet fusion promotes their enlargement, restricting lipolysis and favoring lipid storage. Localizes on the lipid droplet surface, at focal contact sites between lipid droplets, and mediates atypical lipid droplet fusion by promoting directional net neutral lipid transfer from the smaller to larger lipid droplets. The transfer direction may be driven by the internal pressure difference between the contacting lipid droplet pair and occurs at a lower rate than that promoted by CIDEC. May also act as a CEBPB coactivator in epithelial cells to control the expression of a subset of CEBPB downstream target genes, including ID2, IGF1, PRLR, SOCS1, SOCS3, XDH, but not casein. By interacting with CEBPB, strengthens the association of CEBPB with the XDH promoter, increases histone acetylation and dissociates HDAC1 from the promoter. When overexpressed, induces apoptosis; the physiological significance of its role in apoptosis is unclear. In Homo sapiens (Human), this protein is Lipid transferase CIDEA.